The chain runs to 387 residues: 1-deoxy-D-xylulose 5-phosphate reductoisomerase (387 aa).

Residues Thr10, Gly11, Ile13, Asn38, and Asn122 each coordinate NADPH. Lys123 lines the 1-deoxy-D-xylulose 5-phosphate pocket. Glu124 contributes to the NADPH binding site. Mn(2+) is bound at residue Asp148. 1-deoxy-D-xylulose 5-phosphate is bound by residues Ser149, Glu150, Ser174, and His197. Glu150 is a Mn(2+) binding site. Gly203 is a binding site for NADPH. Residues Ser210, Asn215, Lys216, and Glu219 each contribute to the 1-deoxy-D-xylulose 5-phosphate site. Glu219 lines the Mn(2+) pocket.

Belongs to the DXR family. Mg(2+) is required as a cofactor. The cofactor is Mn(2+).

It carries out the reaction 2-C-methyl-D-erythritol 4-phosphate + NADP(+) = 1-deoxy-D-xylulose 5-phosphate + NADPH + H(+). The protein operates within isoprenoid biosynthesis; isopentenyl diphosphate biosynthesis via DXP pathway; isopentenyl diphosphate from 1-deoxy-D-xylulose 5-phosphate: step 1/6. Functionally, catalyzes the NADPH-dependent rearrangement and reduction of 1-deoxy-D-xylulose-5-phosphate (DXP) to 2-C-methyl-D-erythritol 4-phosphate (MEP). In Ehrlichia canis (strain Jake), this protein is 1-deoxy-D-xylulose 5-phosphate reductoisomerase.